The sequence spans 175 residues: Cytidylate kinase (175 aa).

Position 7–15 (7–15 (GQPGSGKTS)) interacts with ATP.

Belongs to the cytidylate kinase family. Type 2 subfamily.

It is found in the cytoplasm. It catalyses the reaction CMP + ATP = CDP + ADP. It carries out the reaction dCMP + ATP = dCDP + ADP. The polypeptide is Cytidylate kinase (Methanocella arvoryzae (strain DSM 22066 / NBRC 105507 / MRE50)).